Reading from the N-terminus, the 156-residue chain is Large ribosomal subunit protein uL15 (156 aa).

The segment covering 1-13 (MKLNEIKDNEGAT) has biased composition (basic and acidic residues). The disordered stretch occupies residues 1-39 (MKLNEIKDNEGATKNRKRLGRGIGSGSGKTAGRGVKGQK). Positions 21–35 (RGIGSGSGKTAGRGV) are enriched in gly residues.

This sequence belongs to the universal ribosomal protein uL15 family. Part of the 50S ribosomal subunit.

In terms of biological role, binds to the 23S rRNA. This Rhizobium meliloti (strain 1021) (Ensifer meliloti) protein is Large ribosomal subunit protein uL15.